The chain runs to 312 residues: Ribosomal RNA small subunit methyltransferase H (312 aa).

S-adenosyl-L-methionine is bound by residues 35–37 (GGH), Asp-55, Phe-79, Asp-101, and Gln-108.

The protein belongs to the methyltransferase superfamily. RsmH family.

The protein resides in the cytoplasm. The enzyme catalyses cytidine(1402) in 16S rRNA + S-adenosyl-L-methionine = N(4)-methylcytidine(1402) in 16S rRNA + S-adenosyl-L-homocysteine + H(+). Functionally, specifically methylates the N4 position of cytidine in position 1402 (C1402) of 16S rRNA. In Glaesserella parasuis serovar 5 (strain SH0165) (Haemophilus parasuis), this protein is Ribosomal RNA small subunit methyltransferase H.